The following is a 498-amino-acid chain: Cytochrome P450 71B24 (498 aa).

A helical transmembrane segment spans residues 1 to 21 (MSILLYFIALLSLIIIKKIKD). Residue cysteine 442 coordinates heme.

The protein belongs to the cytochrome P450 family. Heme is required as a cofactor.

Its subcellular location is the membrane. The sequence is that of Cytochrome P450 71B24 (CYP71B24) from Arabidopsis thaliana (Mouse-ear cress).